Here is a 390-residue protein sequence, read N- to C-terminus: Ureide permease 1 (390 aa).

At 1-9 the chain is on the extracellular side; the sequence is MYMIESKGG. A helical transmembrane segment spans residues 10–30; the sequence is AIACMLLALLFLGTWPAIMTL. The Cytoplasmic segment spans residues 31–44; sequence TERRGRLPQHTYLD. Residues 45–65 traverse the membrane as a helical segment; it reads YTLTNLLAAVIIALTLGEIGP. Topologically, residues 66-78 are extracellular; the sequence is SRPNFFTQLSQDN. Residues 79–99 form a helical membrane-spanning segment; sequence WQSVMFAMAGGIVLSLGNLAT. At 100 to 101 the chain is on the cytoplasmic side; it reads QY. Residues 102-122 form a helical membrane-spanning segment; that stretch reads AWAYVGLSVTEVITASITVVI. The Extracellular portion of the chain corresponds to 123-136; sequence GTTLNYFLDDRINR. The chain crosses the membrane as a helical span at residues 137–157; sequence AEVLFPGVACFLIAVCFGSAV. The Cytoplasmic portion of the chain corresponds to 158 to 221; that stretch reads HKSNAADNKT…RAIKVFGKST (64 aa). Residue 213 to 220 participates in ATP binding; the sequence is AIKVFGKS. The helical transmembrane segment at 222 to 242 threads the bilayer; it reads IIGLVITFFAGICFSLFSPAF. Over 243-261 the chain is Extracellular; sequence NLATNDQWHTLKHGVPKLN. Residues 262 to 282 form a helical membrane-spanning segment; the sequence is VYTAFFYFSISAFVVALILNI. Residues 283 to 307 are Cytoplasmic-facing; that stretch reads RFLYWPILGLPRSSFKAYLNDWNGR. A helical membrane pass occupies residues 308–328; sequence GWSFLAGFLCGFGNGLQFMGG. Residues 329 to 333 are Extracellular-facing; that stretch reads QAAGY. Residues 334–354 traverse the membrane as a helical segment; that stretch reads AAADAVQALPLVSTFWGILLF. At 355-363 the chain is on the cytoplasmic side; the sequence is GEYRRSSRK. Residues 364-384 form a helical membrane-spanning segment; sequence TYTLLISMLLMFIVAVAVLMA. Over 385 to 390 the chain is Extracellular; sequence SSGHRK.

The protein belongs to the plant ureide permease (TC 2.A.7.19) family. As to expression, expressed in leaves, flowers, roots and stems.

The protein resides in the membrane. Proton-coupled transporter that transports a wide spectrum of oxo derivatives of heterocyclic nitrogen compounds, including allantoin, uric acid and xanthine, but not adenine. Mediates high affinity transport of uracil and 5-fluorouracil (a toxic uracil analog). Mediates transport of free pyrimidines and may function during early seedling development in salvage pathways, by the utilization of pyrimidines from seed storage tissue. The polypeptide is Ureide permease 1 (Arabidopsis thaliana (Mouse-ear cress)).